Reading from the N-terminus, the 151-residue chain is Large ribosomal subunit protein bL28c (151 aa).

A chloroplast-targeting transit peptide spans 1 to 74 (MATMVAGISL…PFKPSLQPVA (74 aa)).

Belongs to the bacterial ribosomal protein bL28 family. In terms of assembly, part of the 50S ribosomal subunit.

It localises to the plastid. The protein resides in the chloroplast. The sequence is that of Large ribosomal subunit protein bL28c (RPL28) from Nicotiana tabacum (Common tobacco).